The primary structure comprises 1070 residues: DNA-directed RNA polymerase subunit beta (1070 aa).

The protein belongs to the RNA polymerase beta chain family. In terms of assembly, in plastids the minimal PEP RNA polymerase catalytic core is composed of four subunits: alpha, beta, beta', and beta''. When a (nuclear-encoded) sigma factor is associated with the core the holoenzyme is formed, which can initiate transcription.

Its subcellular location is the plastid. The protein resides in the chloroplast. It carries out the reaction RNA(n) + a ribonucleoside 5'-triphosphate = RNA(n+1) + diphosphate. Its function is as follows. DNA-dependent RNA polymerase catalyzes the transcription of DNA into RNA using the four ribonucleoside triphosphates as substrates. The protein is DNA-directed RNA polymerase subunit beta of Solanum tuberosum (Potato).